Here is a 102-residue protein sequence, read N- to C-terminus: Putative RNA-binding protein RbpA (102 aa).

The RRM domain occupies 2–79 (SIYVGNLSYE…RDLKVNKAKP (78 aa)). Basic and acidic residues predominate over residues 73–84 (KVNKAKPREDRG). Residues 73 to 102 (KVNKAKPREDRGPSGGNRGGYGGGGGRNRY) are disordered. A compositionally biased stretch (gly residues) spans 85–102 (PSGGNRGGYGGGGGRNRY).

The polypeptide is Putative RNA-binding protein RbpA (rbpA) (Nostoc sp. (strain PCC 7120 / SAG 25.82 / UTEX 2576)).